Here is a 577-residue protein sequence, read N- to C-terminus: Vacuolar protein sorting-associated protein 45 (577 aa).

It belongs to the STXBP/unc-18/SEC1 family. Interacts with PEP7 and TLG2.

It localises to the cytoplasm. The protein localises to the vacuole membrane. Essential for vacuolar protein sorting. Function in membrane traffic between the Golgi and the vacuole. The polypeptide is Vacuolar protein sorting-associated protein 45 (VPS45) (Saccharomyces cerevisiae (strain ATCC 204508 / S288c) (Baker's yeast)).